The sequence spans 116 residues: NADH dehydrogenase [ubiquinone] 1 alpha subcomplex subunit 5 (116 aa).

Residue Ala2 is modified to N-acetylalanine. An N6-acetyllysine mark is found at Lys30, Lys46, and Lys60. At Ser89 the chain carries Phosphoserine. Lys98 is modified (N6-acetyllysine; alternate). Residue Lys98 is modified to N6-succinyllysine; alternate.

Belongs to the complex I NDUFA5 subunit family. As to quaternary structure, complex I is composed of 45 different subunits.

It localises to the mitochondrion inner membrane. Its function is as follows. Accessory subunit of the mitochondrial membrane respiratory chain NADH dehydrogenase (Complex I), that is believed not to be involved in catalysis. Complex I functions in the transfer of electrons from NADH to the respiratory chain. The immediate electron acceptor for the enzyme is believed to be ubiquinone. The polypeptide is NADH dehydrogenase [ubiquinone] 1 alpha subcomplex subunit 5 (NDUFA5) (Macaca fascicularis (Crab-eating macaque)).